A 389-amino-acid polypeptide reads, in one-letter code: Putative RNA methyltransferase R405 (389 aa).

S-adenosyl-L-methionine contacts are provided by Gln207, Asp261, and Asp314. Cys342 serves as the catalytic Nucleophile.

Belongs to the class I-like SAM-binding methyltransferase superfamily. RNA M5U methyltransferase family.

The polypeptide is Putative RNA methyltransferase R405 (Acanthamoeba polyphaga (Amoeba)).